The chain runs to 41 residues: Antimicrobial protein PN-AMP1 (41 aa).

Pyrrolidone carboxylic acid is present on Q1. Residues 1-41 (QQCGRQASGRLCGNRLCCSQWGYCGSTASYCGAGCQSQCRS) enclose the Chitin-binding type-1 domain. Cystine bridges form between C3-C18, C12-C24, C17-C31, and C35-C39.

In terms of biological role, chitin-binding protein with a defensive function against numerous chitin containing fungal pathogens. It is also an inhibitor of Gram-positive bacteria such as B.subtilis. This chain is Antimicrobial protein PN-AMP1, found in Ipomoea nil (Japanese morning glory).